Here is a 233-residue protein sequence, read N- to C-terminus: MKKILVKNQVEGGKVAFELLKESLTAGAQTLGLATGSSPIALYQEMVESDVDFSELYSVNLDEYVGLSPEHDQSYHAFMKAQLFDTKPFKESFLPDGMAEDLEKAAKDYDDVLAHHIIDLQILGIGSNGHIGFNEPGTPFDSQTHVVDLTDSTIEANSRFFASRGQVPTKAISMGIASIMAAKKIILFAYGDKKADAIFKMLKGPVTEEVPASVLQNHPDVTLILDQAAAAKL.

The active-site Proton acceptor; for enolization step is Asp-62. Asn-128 acts as the For ring-opening step in catalysis. The active-site Proton acceptor; for ring-opening step is His-130. Catalysis depends on Glu-135, which acts as the For ring-opening step.

It belongs to the glucosamine/galactosamine-6-phosphate isomerase family. NagB subfamily.

The catalysed reaction is alpha-D-glucosamine 6-phosphate + H2O = beta-D-fructose 6-phosphate + NH4(+). It functions in the pathway amino-sugar metabolism; N-acetylneuraminate degradation; D-fructose 6-phosphate from N-acetylneuraminate: step 5/5. In terms of biological role, catalyzes the reversible isomerization-deamination of glucosamine 6-phosphate (GlcN6P) to form fructose 6-phosphate (Fru6P) and ammonium ion. The polypeptide is Glucosamine-6-phosphate deaminase (Streptococcus thermophilus (strain ATCC BAA-491 / LMD-9)).